A 283-amino-acid chain; its full sequence is DNA repair protein RecO (283 aa).

The span at 254–264 (SSPASVGSSAT) shows a compositional bias: polar residues. Positions 254 to 283 (SSPASVGSSATRYFAQGDTDENDRDPPGAR) are disordered.

This sequence belongs to the RecO family.

In terms of biological role, involved in DNA repair and RecF pathway recombination. The polypeptide is DNA repair protein RecO (Roseiflexus sp. (strain RS-1)).